We begin with the raw amino-acid sequence, 417 residues long: Histidine--tRNA ligase (417 aa).

Belongs to the class-II aminoacyl-tRNA synthetase family. As to quaternary structure, homodimer.

The protein localises to the cytoplasm. The enzyme catalyses tRNA(His) + L-histidine + ATP = L-histidyl-tRNA(His) + AMP + diphosphate + H(+). This chain is Histidine--tRNA ligase, found in Caldanaerobacter subterraneus subsp. tengcongensis (strain DSM 15242 / JCM 11007 / NBRC 100824 / MB4) (Thermoanaerobacter tengcongensis).